A 298-amino-acid polypeptide reads, in one-letter code: Leucine-rich repeat-containing protein 38 (298 aa).

A signal peptide spans 1–31; sequence MSLCVAPRHPTGAAAALGLGSLLVLLGPGRA. 2 cysteine pairs are disulfide-bonded: C32–C38 and C36–C46. Residues 32-60 form the LRRNT domain; the sequence is CPAGCACTDPHTVDCRDRGLPSVPDPFPL. Residues 32-251 are Extracellular-facing; sequence CPAGCACTDP…ECKFSLSLTD (220 aa). 5 LRR repeats span residues 61 to 82, 85 to 106, 109 to 130, 133 to 154, and 157 to 177; these read DVRK…FFIF, DLVY…TFSG, KLAF…AFRS, RLVK…AFES, and SLQV…AALD. N119 is a glycosylation site (N-linked (GlcNAc...) asparagine). Residues 190–245 enclose the LRRCT domain; sequence NPWLCDCDFAHLFSWIQENTSKLPKGLDAIQCSLPMEDRRVALRELSEASFSECKF. Cystine bridges form between C194-C221 and C196-C243. Residues 252-272 form a helical membrane-spanning segment; sequence LFIIIFSGVAVSIAAIISSFF. Residues 273 to 298 lie on the Cytoplasmic side of the membrane; it reads LATVVQCFQRCAPNKDTEDEDDDEDD.

Interacts with KCNMA1.

It localises to the cell membrane. Auxiliary protein of the large-conductance, voltage and calcium-activated potassium channel (BK alpha). Modulates gating properties by producing a marked shift in the BK channel's voltage dependence of activation in the hyperpolarizing direction, and in the absence of calcium. The sequence is that of Leucine-rich repeat-containing protein 38 (Lrrc38) from Mus musculus (Mouse).